The chain runs to 106 residues: Large ribosomal subunit protein eL42 (106 aa).

This sequence belongs to the eukaryotic ribosomal protein eL42 family. Component of the large ribosomal subunit.

The protein resides in the cytoplasm. Component of the large ribosomal subunit. The ribosome is a large ribonucleoprotein complex responsible for the synthesis of proteins in the cell. This Papio anubis (Olive baboon) protein is Large ribosomal subunit protein eL42 (RPL36A).